The chain runs to 438 residues: MTARAIIIGAPRSGSGKTSVTIGLLRAFARRGVKVRGIKTGPDYIDPGFHAFATGTPGLNLDSWAMQPDLLRHLFSQQTEDAELILIESAMGLFDGIPVAENRTGSAADLARLFRIPVLLVLDVSGQSQTAATIAHGFAHYDPDVTMGAVVLNRAGSERHRTLCTEAIEKIGLPVVGCVLRDPSLILPERHLGLVQASEHPEIDPHIDRLADAMEKSIDLDTLFSLAAPVDMPCGSVAAAIAPPGQRIALAEDAAFTFLYPHLRRHWRAAGAEIVPFSPLADEAPDESCDICWLPGGYPELFAGKLADAVGFKAGITRFAETKPVHGECGGYMVLGERLEDAEGVIHAMTGLLSHATSFATRKMNLGYRQATIAADSPLGMAGDVLRGHEFHYARVIDPGRDQPFAHMADGQGRPLGPSGGRRGFVSGTFFHAIAKGG.

The GATase cobBQ-type domain maps to 247-438 (RIALAEDAAF…TFFHAIAKGG (192 aa)). Cys-329 serves as the catalytic Nucleophile.

Belongs to the CobB/CbiA family. Requires Mg(2+) as cofactor.

It catalyses the reaction hydrogenobyrinate + 2 L-glutamine + 2 ATP + 2 H2O = hydrogenobyrinate a,c-diamide + 2 L-glutamate + 2 ADP + 2 phosphate + 2 H(+). It functions in the pathway cofactor biosynthesis; adenosylcobalamin biosynthesis; cob(II)yrinate a,c-diamide from precorrin-2 (aerobic route): step 9/10. Its function is as follows. Catalyzes the ATP-dependent amidation of the two carboxylate groups at positions a and c of hydrogenobyrinate, using either L-glutamine or ammonia as the nitrogen source. The polypeptide is Hydrogenobyrinate a,c-diamide synthase (Agrobacterium fabrum (strain C58 / ATCC 33970) (Agrobacterium tumefaciens (strain C58))).